Here is a 236-residue protein sequence, read N- to C-terminus: MNFLYDISAVEIGQHFYWSLGGFQMHGQVLINSWIVLGLIIAFAVTTTRDLKPVPEGGQNLAEFVVEYIRDIAKTQVGHDYLEWTPFIGTLFLFIFVSNWSGALIPWKLIELPHGELGAPTNDINTTVALALLTSLTYFYAGLKKKGLEYFGKYVQPTPILLPINVLEDFTKPLSLSFRLFGNILADELVVAVLVSLVPLVIPIPLIFLGLFTSGIQALIFATLAGAYIGEALEGH.

5 helical membrane-spanning segments follow: residues Met-25 to Val-45, Phe-87 to Trp-107, Asp-123 to Leu-143, Leu-180 to Ile-202, and Gly-210 to Gly-230.

It belongs to the ATPase A chain family. In terms of assembly, F-type ATPases have 2 components, CF(1) - the catalytic core - and CF(0) - the membrane proton channel. CF(1) has five subunits: alpha(3), beta(3), gamma(1), delta(1), epsilon(1). CF(0) has four main subunits: a, b, b' and c.

The protein localises to the plastid. Its subcellular location is the chloroplast thylakoid membrane. In terms of biological role, key component of the proton channel; it plays a direct role in the translocation of protons across the membrane. The protein is ATP synthase subunit a, chloroplastic of Ostreococcus tauri.